Here is a 198-residue protein sequence, read N- to C-terminus: ATP-dependent Clp protease proteolytic subunit (198 aa).

S103 functions as the Nucleophile in the catalytic mechanism. The active site involves H128.

It belongs to the peptidase S14 family. Fourteen ClpP subunits assemble into 2 heptameric rings which stack back to back to give a disk-like structure with a central cavity, resembling the structure of eukaryotic proteasomes.

The protein resides in the cytoplasm. It catalyses the reaction Hydrolysis of proteins to small peptides in the presence of ATP and magnesium. alpha-casein is the usual test substrate. In the absence of ATP, only oligopeptides shorter than five residues are hydrolyzed (such as succinyl-Leu-Tyr-|-NHMec, and Leu-Tyr-Leu-|-Tyr-Trp, in which cleavage of the -Tyr-|-Leu- and -Tyr-|-Trp bonds also occurs).. Cleaves peptides in various proteins in a process that requires ATP hydrolysis. Has a chymotrypsin-like activity. Plays a major role in the degradation of misfolded proteins. The polypeptide is ATP-dependent Clp protease proteolytic subunit (Ruthia magnifica subsp. Calyptogena magnifica).